Reading from the N-terminus, the 1158-residue chain is Protein transport protein Sec31B (1158 aa).

WD repeat units follow at residues 4-47 (KELE…EIFE), 65-110 (VSSR…SSGK), 119-159 (KHTG…VPMT), 166-206 (NPPE…PIIK), 209-254 (SHSS…SPLK), 258-298 (SHSR…VVYK), and 301-341 (TQSS…WEAQ). One copy of the WD 8; interaction with SEC13 repeat lies at 376–407 (SFAFGGKLVTFGLPSIPVQPVAQACSRPVFIS). Disordered stretches follow at residues 485-520 (LKSD…HTAK), 797-843 (TSSY…SSDH), and 968-1010 (GPQD…PEPQ). A compositionally biased stretch (low complexity) spans 822-840 (QPSSVMPFSPSQPSPSQGS).

Belongs to the WD repeat SEC31 family. As to quaternary structure, COPII is composed of at least 5 proteins: the SEC23/24 complex, the SEC13/31 complex and SAR1. SEC13 and SEC31 make a 2:2 tetramer that forms the edge element of the COPII outer coat. The tetramer self-assembles in multiple copies to form the complete polyhedral cage. Interacts (via WD 8) with SEC13. Interacts with SEC31A. In terms of processing, monoubiquitinated by the BCR(KLHL12) E3 ubiquitin ligase complex, leading to regulate the size of COPII coats.

The protein localises to the cytoplasm. Its subcellular location is the cytoplasmic vesicle. It localises to the COPII-coated vesicle membrane. The protein resides in the endoplasmic reticulum membrane. As a component of the coat protein complex II (COPII), may function in vesicle budding and cargo export from the endoplasmic reticulum. This chain is Protein transport protein Sec31B (Sec31b), found in Mus musculus (Mouse).